Consider the following 441-residue polypeptide: NADH-quinone oxidoreductase subunit D 1 (441 aa).

The protein belongs to the complex I 49 kDa subunit family. NDH-1 is composed of 14 different subunits. Subunits NuoB, C, D, E, F, and G constitute the peripheral sector of the complex.

It is found in the cell membrane. It catalyses the reaction a quinone + NADH + 5 H(+)(in) = a quinol + NAD(+) + 4 H(+)(out). NDH-1 shuttles electrons from NADH, via FMN and iron-sulfur (Fe-S) centers, to quinones in the respiratory chain. The immediate electron acceptor for the enzyme in this species is believed to be a menaquinone. Couples the redox reaction to proton translocation (for every two electrons transferred, four hydrogen ions are translocated across the cytoplasmic membrane), and thus conserves the redox energy in a proton gradient. This is NADH-quinone oxidoreductase subunit D 1 from Salinispora tropica (strain ATCC BAA-916 / DSM 44818 / JCM 13857 / NBRC 105044 / CNB-440).